The primary structure comprises 2178 residues: DNA-directed RNA polymerase subunit beta (2178 aa).

3 insert regions span residues 269 to 325 (SKKI…TPFV), 714 to 1508 (KRID…LFYN), and 1703 to 1900 (KGND…LQPM).

The protein belongs to the RNA polymerase beta chain family. In terms of assembly, in plastids the minimal PEP RNA polymerase catalytic core is composed of four subunits: alpha, beta, beta', and beta''. When a (nuclear-encoded) sigma factor is associated with the core the holoenzyme is formed, which can initiate transcription.

The protein localises to the plastid. It localises to the chloroplast. It carries out the reaction RNA(n) + a ribonucleoside 5'-triphosphate = RNA(n+1) + diphosphate. Its function is as follows. DNA-dependent RNA polymerase catalyzes the transcription of DNA into RNA using the four ribonucleoside triphosphates as substrates. The sequence is that of DNA-directed RNA polymerase subunit beta from Tupiella akineta (Green alga).